The sequence spans 496 residues: Acyltransferase clz6 (496 aa).

His163 serves as the catalytic Proton acceptor.

This sequence belongs to the plant acyltransferase family. Monomer.

Its pathway is secondary metabolite biosynthesis. Acyltransferase; part of the gene cluster that mediates the biosynthesis of squalestatin S1 (SQS1, also known as zaragozic acid A), a heavily oxidized fungal polyketide that offers potent cholesterol lowering activity by targeting squalene synthase (SS). SQS1 is composed of a 2,8-dioxobicyclic[3.2.1]octane-3,4,5-tricarboxyclic acid core that is connected to two lipophilic polyketide arms. These initial steps feature the priming of an unusual benzoic acid starter unit onto the highly reducing polyketide synthase clz14, followed by oxaloacetate extension and product release to generate a tricarboxylic acid containing product. The phenylalanine ammonia lyase (PAL) clz10 and the acyl-CoA ligase clz12 are involved in transforming phenylalanine into benzoyl-CoA. The citrate synthase-like protein clz17 is involved in connecting the C-alpha-carbons of the hexaketide chain and oxaloacetate to afford the tricarboxylic acid unit. The potential hydrolytic enzymes, clz11 and clz13, are in close proximity to pks2 and may participate in product release. On the other side, the tetraketide arm is synthesized by a the squalestatin tetraketide synthase clz2 and enzymatically esterified to the core in the last biosynthetic step, by the acetyltransferase clz6. The biosynthesis of the tetraketide must involve 3 rounds of chain extension. After the first and second rounds methyl-transfer occurs, and in all rounds of extension the ketoreductase and dehydratase are active. The enoyl reductase and C-MeT of clz2 are not active in the final round of extension. The acetyltransferase clz6 appears to have a broad substrate selectivity for its acyl CoA substrate, allowing the in vitro synthesis of novel squalestatins. The biosynthesis of SQS1 requires several oxidative steps likely performed by oxidoreductases clz3, clz15 and clz16. Finally, in support of the identification of the cluster as being responsible for SQS1 production, the cluster contains a gene encoding a putative squalene synthase (SS) clz20, suggesting a likely mechanism for self-resistance. In Cochliobolus lunatus (Filamentous fungus), this protein is Acyltransferase clz6.